The sequence spans 599 residues: Adenine deaminase (599 aa).

Belongs to the metallo-dependent hydrolases superfamily. Adenine deaminase family. It depends on Mn(2+) as a cofactor.

The enzyme catalyses adenine + H2O + H(+) = hypoxanthine + NH4(+). This chain is Adenine deaminase, found in Clostridium botulinum (strain 657 / Type Ba4).